The sequence spans 298 residues: 4-hydroxy-tetrahydrodipicolinate synthase (298 aa).

Position 51 (Thr51) interacts with pyruvate. The Proton donor/acceptor role is filled by Tyr139. The active-site Schiff-base intermediate with substrate is Lys167. Ile209 is a pyruvate binding site.

Belongs to the DapA family. Homotetramer; dimer of dimers.

It localises to the cytoplasm. It catalyses the reaction L-aspartate 4-semialdehyde + pyruvate = (2S,4S)-4-hydroxy-2,3,4,5-tetrahydrodipicolinate + H2O + H(+). Its pathway is amino-acid biosynthesis; L-lysine biosynthesis via DAP pathway; (S)-tetrahydrodipicolinate from L-aspartate: step 3/4. Its function is as follows. Catalyzes the condensation of (S)-aspartate-beta-semialdehyde [(S)-ASA] and pyruvate to 4-hydroxy-tetrahydrodipicolinate (HTPA). In Histophilus somni (strain 2336) (Haemophilus somnus), this protein is 4-hydroxy-tetrahydrodipicolinate synthase.